The following is an 800-amino-acid chain: Phosphoinositide 3-kinase adapter protein 1 (800 aa).

Positions 8–145 (GGYDVLILYA…AVKKAISEDS (138 aa)) constitute a TIR domain. The necessary and sufficient to mediate inhibition of NF-kappa-B downstream of activated TLRs stretch occupies residues 10–144 (YDVLILYASD…EAVKKAISED (135 aa)). A DBB domain is found at 185–321 (VQPDHIRCGV…NIPASGLHLF (137 aa)). Phosphotyrosine is present on tyrosine 266. Residues tyrosine 423, tyrosine 448, and tyrosine 463 each carry the phosphotyrosine; by SYK modification. Residues 527–548 (EMASRPPVPVPRPESSSPQPDN) are disordered. The stretch at 643–663 (QQENLKRLRDSITRRQMEKQK) forms a coiled coil. Residues 702-713 (PKKELKRGDWKT) are compositionally biased toward basic and acidic residues. The disordered stretch occupies residues 702–800 (PKKELKRGDW…YPPPVPPRGR (99 aa)). Low complexity predominate over residues 714-737 (ESTSSTTSSASNRSSTRSILSVSS). Polar residues predominate over residues 749–759 (SEASRSRSPIP). Composition is skewed to pro residues over residues 767-777 (LPLPERPPRVP) and 791-800 (YPPPVPPRGR).

Homooligomer. Interacts (phosphorylated on tyrosine residues within YXXM motifs) with PIK3R1 (via SH2 domain); required for BCR- and TLR-mediated activation of phosphoinositide 3-kinase. Post-translationally, constitutively phosphorylated. Phosphorylated on tyrosine residues within the YXXM motifs by BTK and SYK. Isoform 1 and isoform 2 are phosphorylated on tyrosine residues, most likely within the YXXM motifs, via CD19 activation.

It localises to the cytoplasm. Its subcellular location is the cell membrane. In terms of biological role, signaling adapter that contributes to B-cell development by linking B-cell receptor (BCR) signaling to the phosphoinositide 3-kinase (PI3K)-Akt signaling pathway. Has a complementary role to the BCR coreceptor CD19, coupling BCR and PI3K activation by providing a docking site for the PI3K subunit PIK3R1. Alternatively, links Toll-like receptor (TLR) signaling to PI3K activation, a process preventing excessive inflammatory cytokine production. Also involved in the activation of PI3K in natural killer cells. May be involved in the survival of mature B-cells via activation of REL. This Gallus gallus (Chicken) protein is Phosphoinositide 3-kinase adapter protein 1 (PIK3AP1).